Reading from the N-terminus, the 287-residue chain is Bifunctional protein FolD (287 aa).

NADP(+) is bound by residues 171 to 173 (GHS), I196, and I237.

The protein belongs to the tetrahydrofolate dehydrogenase/cyclohydrolase family. Homodimer.

The catalysed reaction is (6R)-5,10-methylene-5,6,7,8-tetrahydrofolate + NADP(+) = (6R)-5,10-methenyltetrahydrofolate + NADPH. It carries out the reaction (6R)-5,10-methenyltetrahydrofolate + H2O = (6R)-10-formyltetrahydrofolate + H(+). The protein operates within one-carbon metabolism; tetrahydrofolate interconversion. Catalyzes the oxidation of 5,10-methylenetetrahydrofolate to 5,10-methenyltetrahydrofolate and then the hydrolysis of 5,10-methenyltetrahydrofolate to 10-formyltetrahydrofolate. The polypeptide is Bifunctional protein FolD (Methanosarcina mazei (strain ATCC BAA-159 / DSM 3647 / Goe1 / Go1 / JCM 11833 / OCM 88) (Methanosarcina frisia)).